Reading from the N-terminus, the 664-residue chain is tRNA (carboxymethyluridine(34)-5-O)-methyltransferase ALKBH8 (664 aa).

The RRM domain occupies 43–120 (QSLVVANGGL…QKIILYLNFV (78 aa)). In terms of domain architecture, Fe2OG dioxygenase spans 220–337 (KPDQMTINQY…RTSFTFRKVR (118 aa)). Position 227–229 (227–229 (NQY)) interacts with 2-oxoglutarate. Fe cation contacts are provided by His238 and Asp240. Zn(2+) is bound at residue His242. His292 provides a ligand contact to Fe cation. Arg328 and Arg334 together coordinate 2-oxoglutarate. Zn(2+) is bound by residues Cys341, Cys343, and Cys349. The interval 411–664 (ADIGCGNGKY…GNWCVILQKA (254 aa)) is methyltransferase domain. The segment at 516–575 (KYLKGNRNSQGKKEEMNSDTSVQRSLVEQMPDMGSRDSASSVPRINDSQEGGCNSRQVSN) is disordered. Positions 552–575 (DSASSVPRINDSQEGGCNSRQVSN) are enriched in polar residues.

It belongs to the alkB family. Interacts with TRMT112. The cofactor is Fe(2+).

It localises to the cytoplasm. Its subcellular location is the nucleus. It carries out the reaction 5-(carboxymethyl)uridine(34) in tRNA + S-adenosyl-L-methionine = 5-(2-methoxy-2-oxoethyl)uridine(34) in tRNA + S-adenosyl-L-homocysteine. In terms of biological role, catalyzes the methylation of 5-carboxymethyl uridine to 5-methylcarboxymethyl uridine at the wobble position of the anticodon loop in tRNA via its methyltransferase domain. Catalyzes the last step in the formation of 5-methylcarboxymethyl uridine at the wobble position of the anticodon loop in target tRNA. Has a preference for tRNA(Arg) and tRNA(Glu), and does not bind tRNA(Lys). Binds tRNA and catalyzes the iron and alpha-ketoglutarate dependent hydroxylation of 5-methylcarboxymethyl uridine at the wobble position of the anticodon loop in tRNA via its dioxygenase domain, giving rise to 5-(S)-methoxycarbonylhydroxymethyluridine; has a preference for tRNA(Gly). Required for normal survival after DNA damage. May inhibit apoptosis and promote cell survival and angiogenesis. The chain is tRNA (carboxymethyluridine(34)-5-O)-methyltransferase ALKBH8 (ALKBH8) from Macaca fascicularis (Crab-eating macaque).